The primary structure comprises 226 residues: Sugar transporter SWEET1 (226 aa).

7 consecutive transmembrane segments (helical) span residues 8–28 (LLST…AMIC), 42–62 (GVPF…GVLT), 67–87 (IVLV…IYYV), 94–114 (AFVR…VVYT), 127–147 (ITGI…LATL), 161–181 (LPLI…GILI), and 185–205 (FIQI…SLFV). The region spanning 8–92 (LLSTTAVIST…LIYYVFTVNK (85 aa)) is the MtN3/slv 1 domain. A MtN3/slv 2 domain is found at 129–210 (GIFCCIVTVC…LSLFVVYPPR (82 aa)).

The protein belongs to the SWEET sugar transporter family.

The protein localises to the golgi apparatus membrane. Its subcellular location is the cell membrane. Functionally, mediates both low-affinity uptake and efflux of sugar across the membrane. This is Sugar transporter SWEET1 (slv) from Drosophila pseudoobscura pseudoobscura (Fruit fly).